Consider the following 44-residue polypeptide: Homeobox protein DLX-1 (44 aa).

The disordered stretch occupies residues 19-44 (RALSAGSPPVPPGWNRIPPLGRAQEE).

This sequence belongs to the distal-less homeobox family. In terms of assembly, interacts with SMAD4 (via homeobox DNA-binding domain). Interacts (via homeobox DNA-binding domain) with POU4F2; this interaction suppresses DLX1-mediated transcriptional activity in postnatal retina and enhances retinal ganglion cell (RGC) differentiation.

Its subcellular location is the nucleus. In terms of biological role, plays a role as a transcriptional activator or repressor. Inhibits several cytokine signaling pathways, such as TGFB1, activin-A/INHBA and BMP4 by interfering with the transcriptional stimulatory activity of transcription factors, such as MSX2, FAST2, SMAD2 and SMAD3 during hematopoietic cell differentiation. Plays a role in terminal differentiation of interneurons, such as amacrine and bipolar cells in the developing retina. Likely to play a regulatory role in the development of the ventral forebrain. May play a role in craniofacial patterning and morphogenesis and may be involved in the early development of diencephalic subdivisions. The sequence is that of Homeobox protein DLX-1 (Dlx1) from Rattus norvegicus (Rat).